The following is a 254-amino-acid chain: Imidazole glycerol phosphate synthase subunit HisF (254 aa).

Residues D11 and D130 contribute to the active site.

The protein belongs to the HisA/HisF family. As to quaternary structure, heterodimer of HisH and HisF.

It localises to the cytoplasm. The enzyme catalyses 5-[(5-phospho-1-deoxy-D-ribulos-1-ylimino)methylamino]-1-(5-phospho-beta-D-ribosyl)imidazole-4-carboxamide + L-glutamine = D-erythro-1-(imidazol-4-yl)glycerol 3-phosphate + 5-amino-1-(5-phospho-beta-D-ribosyl)imidazole-4-carboxamide + L-glutamate + H(+). It participates in amino-acid biosynthesis; L-histidine biosynthesis; L-histidine from 5-phospho-alpha-D-ribose 1-diphosphate: step 5/9. Functionally, IGPS catalyzes the conversion of PRFAR and glutamine to IGP, AICAR and glutamate. The HisF subunit catalyzes the cyclization activity that produces IGP and AICAR from PRFAR using the ammonia provided by the HisH subunit. The sequence is that of Imidazole glycerol phosphate synthase subunit HisF from Microcystis aeruginosa (strain NIES-843 / IAM M-2473).